A 908-amino-acid polypeptide reads, in one-letter code: Low affinity vacuolar monovalent cation/H(+) antiporter (908 aa).

A compositionally biased stretch (polar residues) spans 1–15 (MAKNNHISASGNSTS). Residues 1-20 (MAKNNHISASGNSTSGDHRL) form a disordered region. The Cytoplasmic segment spans residues 1 to 244 (MAKNNHISAS…WEVTCSNVLW (244 aa)). Residue T26 is modified to Phosphothreonine. Residue S32 is modified to Phosphoserine. Residue T33 is modified to Phosphothreonine. The interval 68-147 (NKSKRSVSSQ…DDEDANDDSR (80 aa)) is disordered. The segment covering 73–87 (SVSSQSPIVHSSNNT) has biased composition (low complexity). Positions 102 to 121 (ESLSSKSHSVPDLNTATPSS) are enriched in polar residues. S110 carries the phosphoserine modification. Position 118 is a phosphothreonine (T118). Position 121 is a phosphoserine (S121). The helical transmembrane segment at 245–265 (FILFGFPIAILFYSAAIVVFL) threads the bilayer. The Vacuolar segment spans residues 266–408 (LGGGGLVTNS…GRVLFYTIFH (143 aa)). N361 carries N-linked (GlcNAc...) asparagine glycosylation. The chain crosses the membrane as a helical span at residues 409–429 (LVLQPILAVLSLCLWLLVFTI). At 430–494 (PMSNVLWQIM…HYYKYTVDGT (65 aa)) the chain is on the cytoplasmic side. The helical transmembrane segment at 495-515 (NVIVVNLISIVFFTIFDFYVL) threads the bilayer. The Vacuolar portion of the chain corresponds to 516-530 (KNFLHWKTWFTYESS). A helical transmembrane segment spans residues 531 to 551 (IFILCLTSTIPLAFYIGQAVA). At 552-560 (SISAQTSMG) the chain is on the cytoplasmic side. The chain crosses the membrane as a helical span at residues 561 to 581 (VGAVINAFFSTIVEIFLYCVA). Residues 582–587 (LQQKKG) are Vacuolar-facing. Residues 588-608 (LLVEGSMIGSILGAVLLLPGL) form a helical membrane-spanning segment. The Cytoplasmic segment spans residues 609-626 (SMCGGALNRKTQRYNPAS). A helical transmembrane segment spans residues 627–647 (AGVSSALLIFSMIVMFVPTVL). The Vacuolar portion of the chain corresponds to 648–686 (YEIYGGYSVNCADGANDRDCTFSHPPLKFNRLFTHVIQP). A helical transmembrane segment spans residues 687–707 (MSISCAIVLFCAYIIGLWFTL). Over 708–746 (RTHAKMIWQLPIADPTSTAPEQQEQNSHDAPNWSRSKST) the chain is Cytoplasmic. A helical membrane pass occupies residues 747 to 767 (CILLMSTLLYAIIAEILVSCV). The Vacuolar portion of the chain corresponds to 768–783 (DAVLEDIPSLNPKFLG). The helical transmembrane segment at 784-804 (LTIFALIPNTTEFLNAISFAI) threads the bilayer. Residues 805 to 816 (HGNVALSMEIGS) are Cytoplasmic-facing. Residues 817 to 837 (AYALQVCLLQIPSLVIYSIFY) form a helical membrane-spanning segment. Residues 838 to 851 (TWNVKKSMINIRTQ) are Vacuolar-facing. Residues 852–872 (MFPLVFPRWDIFGAMTSVFMF) traverse the membrane as a helical segment. Residues 873–885 (TYLYAEGKSNYFK) lie on the Cytoplasmic side of the membrane. The chain crosses the membrane as a helical span at residues 886–906 (GSMLILLYIIIVVGFYFQGAL). Topologically, residues 907-908 (SE) are vacuolar.

Belongs to the Ca(2+):cation antiporter (CaCA) (TC 2.A.19) family.

The protein localises to the vacuole membrane. Has a role in promoting intracellular monovalent cation sequestration via the exchange of monovalent cations and especially Na(+) for hydrogen ions across the vacuolar membrane. The protein is Low affinity vacuolar monovalent cation/H(+) antiporter (VNX1) of Saccharomyces cerevisiae (strain ATCC 204508 / S288c) (Baker's yeast).